The chain runs to 492 residues: Ribose import ATP-binding protein RbsA (492 aa).

2 consecutive ABC transporter domains span residues 3–239 (IDMR…VGRK) and 238–492 (RKLE…TGGK). ATP is bound at residue 35–42 (GENGAGKS).

This sequence belongs to the ABC transporter superfamily. Ribose importer (TC 3.A.1.2.1) family. As to quaternary structure, the complex is composed of an ATP-binding protein (RbsA), two transmembrane proteins (RbsC) and a solute-binding protein (RbsB).

The protein localises to the cell membrane. It catalyses the reaction D-ribose(out) + ATP + H2O = D-ribose(in) + ADP + phosphate + H(+). Part of the ABC transporter complex RbsABC involved in ribose import. Responsible for energy coupling to the transport system. This chain is Ribose import ATP-binding protein RbsA, found in Streptococcus agalactiae serotype III (strain NEM316).